The chain runs to 325 residues: Serpentine receptor class gamma-16 (325 aa).

Transmembrane regions (helical) follow at residues 25–45 (FCLYLIPGAILHVLILRILLI), 65–85 (VVSLVLIFWGIFFNRLFMFIP), 87–107 (LCPLVSPLFFEPSLFLKMYYW), 144–164 (LAVTTVFVVLALPFFGSWNLL), 187–207 (WASLSMFQSIFLLIALCFTII), 232–252 (FVSLFYSIAFLVVAVSQLIFV), and 264–284 (LLFQFFAFDFLTVGSAVIIML).

Belongs to the nematode receptor-like protein srg family.

Its subcellular location is the membrane. The polypeptide is Serpentine receptor class gamma-16 (srg-16) (Caenorhabditis elegans).